We begin with the raw amino-acid sequence, 240 residues long: Octanoyltransferase (240 aa).

In terms of domain architecture, BPL/LPL catalytic spans 49-233; sequence GEAPELVWLL…AFESVFGATR (185 aa). Substrate is bound by residues 87–94, 162–164, and 175–177; these read RGGQVTYH, AIG, and GIA. The active-site Acyl-thioester intermediate is C193.

This sequence belongs to the LipB family.

Its subcellular location is the cytoplasm. It catalyses the reaction octanoyl-[ACP] + L-lysyl-[protein] = N(6)-octanoyl-L-lysyl-[protein] + holo-[ACP] + H(+). The protein operates within protein modification; protein lipoylation via endogenous pathway; protein N(6)-(lipoyl)lysine from octanoyl-[acyl-carrier-protein]: step 1/2. Functionally, catalyzes the transfer of endogenously produced octanoic acid from octanoyl-acyl-carrier-protein onto the lipoyl domains of lipoate-dependent enzymes. Lipoyl-ACP can also act as a substrate although octanoyl-ACP is likely to be the physiological substrate. The protein is Octanoyltransferase of Bradyrhizobium sp. (strain BTAi1 / ATCC BAA-1182).